A 289-amino-acid chain; its full sequence is 4-hydroxy-tetrahydrodipicolinate synthase (289 aa).

A pyruvate-binding site is contributed by T43. Y131 functions as the Proton donor/acceptor in the catalytic mechanism. K160 functions as the Schiff-base intermediate with substrate in the catalytic mechanism. Residue V200 coordinates pyruvate.

It belongs to the DapA family. As to quaternary structure, homotetramer; dimer of dimers.

It localises to the cytoplasm. It catalyses the reaction L-aspartate 4-semialdehyde + pyruvate = (2S,4S)-4-hydroxy-2,3,4,5-tetrahydrodipicolinate + H2O + H(+). The protein operates within amino-acid biosynthesis; L-lysine biosynthesis via DAP pathway; (S)-tetrahydrodipicolinate from L-aspartate: step 3/4. Its function is as follows. Catalyzes the condensation of (S)-aspartate-beta-semialdehyde [(S)-ASA] and pyruvate to 4-hydroxy-tetrahydrodipicolinate (HTPA). In Methanococcus maripaludis (strain C5 / ATCC BAA-1333), this protein is 4-hydroxy-tetrahydrodipicolinate synthase.